Here is a 283-residue protein sequence, read N- to C-terminus: Undecaprenyl-diphosphatase (283 aa).

The next 7 membrane-spanning stretches (helical) occupy residues 40–60, 85–105, 113–133, 153–173, 193–213, 227–247, and 259–279; these read GAAFTAIVQIGTLAAVLIYFF, AKMGWMIAAGTIPIVIFGLLF, LRSLYWISGALIGLALLLTIA, IGWKDALLIGLIQSIALIPGS, AARFSFLLSLPSVLAAGVFQL, LIAIIVATIVSGIVGYASIAF, and VFIIYRLLLGSGILLMLATGM.

This sequence belongs to the UppP family.

It localises to the cell inner membrane. It carries out the reaction di-trans,octa-cis-undecaprenyl diphosphate + H2O = di-trans,octa-cis-undecaprenyl phosphate + phosphate + H(+). In terms of biological role, catalyzes the dephosphorylation of undecaprenyl diphosphate (UPP). Confers resistance to bacitracin. The chain is Undecaprenyl-diphosphatase from Chlorobium limicola (strain DSM 245 / NBRC 103803 / 6330).